Consider the following 259-residue polypeptide: Major cell-binding factor (259 aa).

Residues 1 to 26 (MVFRKSLLKLAVFALGACVAFSNANA) form the signal peptide.

It belongs to the bacterial solute-binding protein 3 family.

The protein localises to the cell surface. Common antigen and a major cell adherence molecule. Most probably involved, with PEB1C, in a binding-protein-dependent transport system for an amino acid. May be involved in binding to intestinal cells. This is Major cell-binding factor (peb1A) from Campylobacter jejuni subsp. jejuni serotype O:23/36 (strain 81-176).